A 137-amino-acid polypeptide reads, in one-letter code: MAANQKIVFALVCLFLACDLVLGQQQAANSSDSDSDVAESRTFGHHFLRRISFALVPGAFVVGVITTLLAALTVVSIKGLGVGVILLVLAIGQMLSRALPVQAAAAYAAAPVPVQAPVPVVYSHSHTQQPVWLEKEW.

3 helical membrane-spanning segments follow: residues 7 to 27 (IVFALVCLFLACDLVLGQQQA), 55 to 75 (LVPGAFVVGVITTLLAALTVV), and 76 to 96 (SIKGLGVGVILLVLAIGQMLS).

As to quaternary structure, interacts with crb.

The protein resides in the apical cell membrane. Transmembrane protein that plays a key role in trachea development by regulating crb localization and maintenance at the apical cell membrane. Required for anisotropic apical surface expansion important for tracheal tube elongation and lumen stability at larval stages. This Drosophila melanogaster (Fruit fly) protein is Protein apnoia.